The primary structure comprises 431 residues: Histidinol dehydrogenase (431 aa).

Residues Y127, Q189, and N212 each contribute to the NAD(+) site. 3 residues coordinate substrate: S237, Q259, and H262. Residues Q259 and H262 each contribute to the Zn(2+) site. Residues E326 and H327 each act as proton acceptor in the active site. Substrate-binding residues include H327, D360, E414, and H419. D360 contributes to the Zn(2+) binding site. H419 is a binding site for Zn(2+).

It belongs to the histidinol dehydrogenase family. It depends on Zn(2+) as a cofactor.

The enzyme catalyses L-histidinol + 2 NAD(+) + H2O = L-histidine + 2 NADH + 3 H(+). It functions in the pathway amino-acid biosynthesis; L-histidine biosynthesis; L-histidine from 5-phospho-alpha-D-ribose 1-diphosphate: step 9/9. Its function is as follows. Catalyzes the sequential NAD-dependent oxidations of L-histidinol to L-histidinaldehyde and then to L-histidine. The protein is Histidinol dehydrogenase of Xanthomonas oryzae pv. oryzae (strain KACC10331 / KXO85).